Consider the following 242-residue polypeptide: Ribonuclease PH (242 aa).

Phosphate-binding positions include Arg-87 and Ser-125–Arg-127.

The protein belongs to the RNase PH family. Homohexameric ring arranged as a trimer of dimers.

The enzyme catalyses tRNA(n+1) + phosphate = tRNA(n) + a ribonucleoside 5'-diphosphate. Functionally, phosphorolytic 3'-5' exoribonuclease that plays an important role in tRNA 3'-end maturation. Removes nucleotide residues following the 3'-CCA terminus of tRNAs; can also add nucleotides to the ends of RNA molecules by using nucleoside diphosphates as substrates, but this may not be physiologically important. Probably plays a role in initiation of 16S rRNA degradation (leading to ribosome degradation) during starvation. This chain is Ribonuclease PH, found in Synechococcus sp. (strain JA-3-3Ab) (Cyanobacteria bacterium Yellowstone A-Prime).